The primary structure comprises 522 residues: Cytochrome P450 26C1 (522 aa).

Residues 9–29 (LSVLGAAGTALLCAGLLLSLA) traverse the membrane as a helical segment. Cys-459 provides a ligand contact to heme.

Belongs to the cytochrome P450 family. Heme is required as a cofactor. In terms of tissue distribution, detected in most tissues at very low level.

Its subcellular location is the membrane. The catalysed reaction is an organic molecule + reduced [NADPH--hemoprotein reductase] + O2 = an alcohol + oxidized [NADPH--hemoprotein reductase] + H2O + H(+). The enzyme catalyses all-trans-retinoate + reduced [NADPH--hemoprotein reductase] + O2 = all-trans-4-hydroxyretinoate + oxidized [NADPH--hemoprotein reductase] + H2O + H(+). It catalyses the reaction all-trans-4-hydroxyretinoate + reduced [NADPH--hemoprotein reductase] + O2 = all-trans-4-oxoretinoate + oxidized [NADPH--hemoprotein reductase] + 2 H2O + H(+). It carries out the reaction 9-cis-retinoate + reduced [NADPH--hemoprotein reductase] + O2 = 9-cis-4-hydroxyretinoate + oxidized [NADPH--hemoprotein reductase] + H2O + H(+). The catalysed reaction is 9-cis-4-hydroxyretinoate + reduced [NADPH--hemoprotein reductase] + O2 = 9-cis-4-oxoretinoate + oxidized [NADPH--hemoprotein reductase] + 2 H2O + H(+). The enzyme catalyses all-trans-4-hydroxy-13,14-dihydroretinoate + reduced [NADPH--hemoprotein reductase] + O2 = all-trans-4-oxo-13,14-dihydroretinoate + oxidized [NADPH--hemoprotein reductase] + 2 H2O + H(+). It catalyses the reaction all-trans-13,14-dihydroretinoate + reduced [NADPH--hemoprotein reductase] + O2 = all-trans-4-hydroxy-13,14-dihydroretinoate + oxidized [NADPH--hemoprotein reductase] + H2O + H(+). A cytochrome P450 monooxygenase involved in the metabolism of retinoates (RAs), the active metabolites of vitamin A, and critical signaling molecules in animals. RAs exist as at least four different isomers: all-trans-RA (atRA), 9-cis-RA, 13-cis-RA, and 9,13-dicis-RA, where atRA is considered to be the biologically active isomer, although 9-cis-RA and 13-cis-RA also have activity. Catalyzes the oxidation of atRA primarily at C-4. Oxidation of atRA limits its biological activity and initiates a degradative process leading to its eventual elimination, thereby contributes to the regulation of atRA homeostasis and signaling. Able to metabolize other RAs such as 9-cis with high efficiency. Can oxidize all-trans-13,14-dihydroretinoate (DRA) to metabolites which could include all-trans-4-oxo-DRA, all-trans-4-hydroxy-DRA, all-trans-5,8-epoxy-DRA, and all-trans-18-hydroxy-DRA. Shares sequence similarity with other CYP26 family members, but has higher affinity to 9-cis-RA and is much less sensitive to the inhibitory effects of ketoconazole. In cooperation with Cyp26a1, contributes to the CNS patterning and the development of regions of higher visual acuity. This is Cytochrome P450 26C1 (CYP26C1) from Homo sapiens (Human).